The following is a 580-amino-acid chain: MVEEASKSEQINITEVWTTTWETPYIMRLALSAGIGGLLFGYNTGVIAGALLYIKEEFGEVDNKTWLQEIIVSMTVAGAIVGAAIGGWYNDKFGRRMSVLIADVLFLLGALVMVIAHAPWVIILGRLLVGFGVGMASMTSPLYISEMSPARIRGALVSTNGLLITGGQFLSYLINLAFVHTPGTWRWMLGVSAIPAIIQFCLMLTLPESPRWLYRNDRKAESRDILERIYPAEMVEAEIAALKESVRAETADEDIIGHTFSDKLRGALSNPVVRHGLAAGITVQVAQQFVGINTVMYYSPTILQFAGYASNKTAMALALITSGLNAVGSVVSMMFVDRYGRRKLMIISMFGIITCLVILAAVFNEASNHAPKIDKRDSRNFAKNATCPAFAPFTASRSPPSNWNCMKCLQYDCGFCSNGAQEYAPGACIVQSADMKALCHSKGRTFFKDGCPSKFGYLAIVFLGLYIIVYAPGMGTVPWIVNSEIYPLRYRGLAGGIAAVSNWMSNLVVSETFLTLTNAVGSSGTFLLFAGSSAVGLFFIWLLVPETKGLQFEEVEKLLEGGFRPSLLRPTTKENQVETP.

The next 12 helical transmembrane spans lie at 34–54 (GIGGLLFGYNTGVIAGALLYI), 69–89 (EIIVSMTVAGAIVGAAIGGWY), 104–124 (VLFLLGALVMVIAHAPWVIIL), 127–147 (LLVGFGVGMASMTSPLYISEM), 161–181 (GLLITGGQFLSYLINLAFVHT), 187–207 (WMLGVSAIPAIIQFCLMLTLP), 289–309 (FVGINTVMYYSPTILQFAGYA), 316–336 (ALALITSGLNAVGSVVSMMFV), 344–364 (LMIISMFGIITCLVILAAVFN), 455–475 (FGYLAIVFLGLYIIVYAPGMG), 493–513 (LAGGIAAVSNWMSNLVVSETF), and 524–544 (GTFLLFAGSSAVGLFFIWLLV).

The protein belongs to the major facilitator superfamily. Sugar transporter (TC 2.A.1.1) family.

It localises to the membrane. Plasma membrane inositol-proton symporter. This is Probable inositol transporter 3 (INT3) from Arabidopsis thaliana (Mouse-ear cress).